The chain runs to 201 residues: LexA repressor (201 aa).

The segment at residues 28-48 (LREIAAQLGISGTLGVMKHLE) is a DNA-binding region (H-T-H motif). Residues Ser120 and Lys157 each act as for autocatalytic cleavage activity in the active site.

This sequence belongs to the peptidase S24 family. Homodimer.

The enzyme catalyses Hydrolysis of Ala-|-Gly bond in repressor LexA.. Represses a number of genes involved in the response to DNA damage (SOS response), including recA and lexA. In the presence of single-stranded DNA, RecA interacts with LexA causing an autocatalytic cleavage which disrupts the DNA-binding part of LexA, leading to derepression of the SOS regulon and eventually DNA repair. This chain is LexA repressor, found in Citrifermentans bemidjiense (strain ATCC BAA-1014 / DSM 16622 / JCM 12645 / Bem) (Geobacter bemidjiensis).